The following is a 433-amino-acid chain: Serine--tRNA ligase (433 aa).

L-serine is bound at residue 239 to 241 (TAE). 270 to 272 (RSE) lines the ATP pocket. Glu-293 serves as a coordination point for L-serine. 357 to 360 (EISS) contacts ATP. Ser-393 serves as a coordination point for L-serine.

This sequence belongs to the class-II aminoacyl-tRNA synthetase family. Type-1 seryl-tRNA synthetase subfamily. In terms of assembly, homodimer. The tRNA molecule binds across the dimer.

The protein localises to the cytoplasm. The enzyme catalyses tRNA(Ser) + L-serine + ATP = L-seryl-tRNA(Ser) + AMP + diphosphate + H(+). The catalysed reaction is tRNA(Sec) + L-serine + ATP = L-seryl-tRNA(Sec) + AMP + diphosphate + H(+). Its pathway is aminoacyl-tRNA biosynthesis; selenocysteinyl-tRNA(Sec) biosynthesis; L-seryl-tRNA(Sec) from L-serine and tRNA(Sec): step 1/1. In terms of biological role, catalyzes the attachment of serine to tRNA(Ser). Is also able to aminoacylate tRNA(Sec) with serine, to form the misacylated tRNA L-seryl-tRNA(Sec), which will be further converted into selenocysteinyl-tRNA(Sec). The polypeptide is Serine--tRNA ligase (Sorangium cellulosum (strain So ce56) (Polyangium cellulosum (strain So ce56))).